The sequence spans 345 residues: tRNA N6-adenosine threonylcarbamoyltransferase (345 aa).

Fe cation is bound by residues H109 and H113. Substrate is bound by residues 136–140 (TVSGG), D169, G182, D186, and N284. Fe cation is bound at residue D312.

The protein belongs to the KAE1 / TsaD family. Fe(2+) is required as a cofactor.

The protein localises to the cytoplasm. It catalyses the reaction L-threonylcarbamoyladenylate + adenosine(37) in tRNA = N(6)-L-threonylcarbamoyladenosine(37) in tRNA + AMP + H(+). Functionally, required for the formation of a threonylcarbamoyl group on adenosine at position 37 (t(6)A37) in tRNAs that read codons beginning with adenine. Is involved in the transfer of the threonylcarbamoyl moiety of threonylcarbamoyl-AMP (TC-AMP) to the N6 group of A37, together with TsaE and TsaB. TsaD likely plays a direct catalytic role in this reaction. This is tRNA N6-adenosine threonylcarbamoyltransferase from Prosthecochloris aestuarii (strain DSM 271 / SK 413).